The chain runs to 943 residues: Leucine--tRNA ligase (943 aa).

The 'HIGH' region motif lies at 36-46 (PYPSGSMHVGH). Positions 623–627 (KMSSS) match the 'KMSKS' region motif. A disordered region spans residues 910 to 943 (ASEVVIHTDPEEAPGPEDRKAGARPLRPGIWLEE). Residues 915–930 (IHTDPEEAPGPEDRKA) show a composition bias toward basic and acidic residues.

The protein belongs to the class-I aminoacyl-tRNA synthetase family.

The protein localises to the cytoplasm. It carries out the reaction tRNA(Leu) + L-leucine + ATP = L-leucyl-tRNA(Leu) + AMP + diphosphate. The sequence is that of Leucine--tRNA ligase from Methanopyrus kandleri (strain AV19 / DSM 6324 / JCM 9639 / NBRC 100938).